We begin with the raw amino-acid sequence, 379 residues long: Sulfate adenylyltransferase (379 aa).

It belongs to the sulfate adenylyltransferase family.

The catalysed reaction is sulfate + ATP + H(+) = adenosine 5'-phosphosulfate + diphosphate. Its pathway is sulfur metabolism; hydrogen sulfide biosynthesis; sulfite from sulfate: step 1/3. This is Sulfate adenylyltransferase from Cenarchaeum symbiosum (strain A).